The chain runs to 870 residues: Linoleate 9S-lipoxygenase 2 (870 aa).

Residues 32-158 (NDFGATVIDG…KYRYNRVFFS (127 aa)) form the PLAT domain. A Lipoxygenase domain is found at 161 to 870 (TSLPSKMPAA…ARGIPNSISI (710 aa)). A disordered region spans residues 203-243 (YNDLGEPDSGNPRPVLGGSPDRPYPRRGRTGRKPTKTDPTA). The segment covering 227–236 (PRRGRTGRKP) has biased composition (basic residues). Residues histidine 525, histidine 530, histidine 716, asparagine 720, and isoleucine 870 each contribute to the Fe cation site.

Belongs to the lipoxygenase family. In terms of assembly, monomer. Requires Fe cation as cofactor.

The protein localises to the cytoplasm. It catalyses the reaction (9Z,12Z)-octadecadienoate + O2 = (9S)-hydroperoxy-(10E,12Z)-octadecadienoate. It participates in lipid metabolism; oxylipin biosynthesis. Its function is as follows. Plant lipoxygenase may be involved in a number of diverse aspects of plant physiology including growth and development, pest resistance, and senescence or responses to wounding. Catalyzes the hydroperoxidation of lipids containing a cis,cis-1,4-pentadiene structure. The polypeptide is Linoleate 9S-lipoxygenase 2 (LOX1.1) (Oryza sativa subsp. japonica (Rice)).